A 197-amino-acid chain; its full sequence is Holliday junction resolvase RecU (197 aa).

Mg(2+) is bound by residues Thr-82, Asp-84, Glu-97, and Gln-116.

This sequence belongs to the RecU family. It depends on Mg(2+) as a cofactor.

It is found in the cytoplasm. It carries out the reaction Endonucleolytic cleavage at a junction such as a reciprocal single-stranded crossover between two homologous DNA duplexes (Holliday junction).. In terms of biological role, endonuclease that resolves Holliday junction intermediates in genetic recombination. Cleaves mobile four-strand junctions by introducing symmetrical nicks in paired strands. Promotes annealing of linear ssDNA with homologous dsDNA. Required for DNA repair, homologous recombination and chromosome segregation. The sequence is that of Holliday junction resolvase RecU from Streptococcus mutans serotype c (strain ATCC 700610 / UA159).